We begin with the raw amino-acid sequence, 415 residues long: Serine hydroxymethyltransferase (415 aa).

(6S)-5,6,7,8-tetrahydrofolate-binding positions include leucine 117 and 121 to 123 (GHL). The residue at position 226 (lysine 226) is an N6-(pyridoxal phosphate)lysine.

This sequence belongs to the SHMT family. As to quaternary structure, homodimer. Pyridoxal 5'-phosphate is required as a cofactor.

It localises to the cytoplasm. The catalysed reaction is (6R)-5,10-methylene-5,6,7,8-tetrahydrofolate + glycine + H2O = (6S)-5,6,7,8-tetrahydrofolate + L-serine. The protein operates within one-carbon metabolism; tetrahydrofolate interconversion. Its pathway is amino-acid biosynthesis; glycine biosynthesis; glycine from L-serine: step 1/1. Its function is as follows. Catalyzes the reversible interconversion of serine and glycine with tetrahydrofolate (THF) serving as the one-carbon carrier. This reaction serves as the major source of one-carbon groups required for the biosynthesis of purines, thymidylate, methionine, and other important biomolecules. Also exhibits THF-independent aldolase activity toward beta-hydroxyamino acids, producing glycine and aldehydes, via a retro-aldol mechanism. The sequence is that of Serine hydroxymethyltransferase from Leptospira interrogans serogroup Icterohaemorrhagiae serovar copenhageni (strain Fiocruz L1-130).